We begin with the raw amino-acid sequence, 107 residues long: Iron-binding protein IscA (107 aa).

Residues C35, C99, and C101 each contribute to the Fe cation site.

This sequence belongs to the HesB/IscA family. Homodimer; may form tetramers and higher multimers. It depends on Fe cation as a cofactor.

In terms of biological role, is able to transfer iron-sulfur clusters to apo-ferredoxin. Multiple cycles of [2Fe2S] cluster formation and transfer are observed, suggesting that IscA acts catalytically. Recruits intracellular free iron so as to provide iron for the assembly of transient iron-sulfur cluster in IscU in the presence of IscS, L-cysteine and the thioredoxin reductase system TrxA/TrxB. The protein is Iron-binding protein IscA of Cronobacter sakazakii (strain ATCC BAA-894) (Enterobacter sakazakii).